We begin with the raw amino-acid sequence, 121 residues long: Small ribosomal subunit protein uS13 (121 aa).

Positions 91–121 (HRRGLPVRGQNTKNNARTRKGPSKTVAGKKK) are disordered. Over residues 106–121 (ARTRKGPSKTVAGKKK) the composition is skewed to basic residues.

Belongs to the universal ribosomal protein uS13 family. As to quaternary structure, part of the 30S ribosomal subunit. Forms a loose heterodimer with protein S19. Forms two bridges to the 50S subunit in the 70S ribosome.

Its function is as follows. Located at the top of the head of the 30S subunit, it contacts several helices of the 16S rRNA. In the 70S ribosome it contacts the 23S rRNA (bridge B1a) and protein L5 of the 50S subunit (bridge B1b), connecting the 2 subunits; these bridges are implicated in subunit movement. Contacts the tRNAs in the A and P-sites. This chain is Small ribosomal subunit protein uS13, found in Listeria monocytogenes serotype 4b (strain CLIP80459).